We begin with the raw amino-acid sequence, 592 residues long: Inactive glycosyltransferase 25 family member 3 (592 aa).

A signal peptide spans 1–19; the sequence is MHVARLLPLLLLLGQQLRA. 4 N-linked (GlcNAc...) asparagine glycosylation sites follow: Asn-72, Asn-150, Asn-234, and Asn-357. The interval 540 to 592 is disordered; the sequence is AEWLSDTETSSPWDDDSGRLISQTGSQKALRGPHLHLTGSSGHSLHPHHRDEL. Positions 589–592 match the Prevents secretion from ER motif; it reads RDEL.

It belongs to the glycosyltransferase 25 family.

It localises to the endoplasmic reticulum lumen. Its function is as follows. Probable cell adhesion protein involved in leukocyte transmigration across the blood-brain barrier. Does not express any beta-galactosyltransferase activity in vitro. The polypeptide is Inactive glycosyltransferase 25 family member 3 (Cercam) (Mus musculus (Mouse)).